A 90-amino-acid chain; its full sequence is Mitochondrial import inner membrane translocase subunit Tim8 A (90 aa).

The Twin CX3C motif motif lies at 36–59 (CWEKCMDKPGPKLDSRTEVCFVNC). Cystine bridges form between Cys36–Cys59 and Cys40–Cys55.

It belongs to the small Tim family. Heterohexamer; composed of 3 copies of TIMM8A and 3 copies of TIMM13, named soluble 70 kDa complex. Associates with the TIM22 complex, whose core is composed of TIMM22.

The protein localises to the mitochondrion inner membrane. Its function is as follows. Mitochondrial intermembrane chaperone that participates in the import and insertion of some multi-pass transmembrane proteins into the mitochondrial inner membrane. Also required for the transfer of beta-barrel precursors from the TOM complex to the sorting and assembly machinery (SAM complex) of the outer membrane. Acts as a chaperone-like protein that protects the hydrophobic precursors from aggregation and guide them through the mitochondrial intermembrane space. The TIMM8-TIMM13 complex mediates the import of some proteins while the predominant TIMM9-TIMM10 70 kDa complex mediates the import of much more proteins. This is Mitochondrial import inner membrane translocase subunit Tim8 A (timm8a) from Danio rerio (Zebrafish).